A 125-amino-acid polypeptide reads, in one-letter code: Large ribosomal subunit protein bL20 (125 aa).

This sequence belongs to the bacterial ribosomal protein bL20 family.

Its function is as follows. Binds directly to 23S ribosomal RNA and is necessary for the in vitro assembly process of the 50S ribosomal subunit. It is not involved in the protein synthesizing functions of that subunit. The protein is Large ribosomal subunit protein bL20 of Thermobifida fusca (strain YX).